The chain runs to 287 residues: U-megalopygitoxin(8)-Mc8 (287 aa).

A signal peptide spans Met1 to Gly17.

This sequence belongs to the caterpillar 8 family. Contains 2 disulfide bonds. Expressed by the venom apparatus.

Its subcellular location is the secreted. Its function is as follows. Probable toxin. The sequence is that of U-megalopygitoxin(8)-Mc8 from Megalopyge crispata (Black-waved flannel moth).